Reading from the N-terminus, the 175-residue chain is MQSLQDKASVLSGVDQAEAFAIDESNLFDKLGLQTFINLSTNFYTRVYDDEEEWFQSIFSNSNKEDAIQNQYEFFVQRMGGPPLYSQRKGHPALIGRHRPFPVTHQAAERWLEHMQNALDDSVDIDQDSKIKMMKFFRHTAFFLVAGNELKNQNEKPKHKPQCACKHAANKPAEE.

Heme is bound by residues Tyr85 and His98. Residues 153–175 are disordered; it reads QNEKPKHKPQCACKHAANKPAEE.

This sequence belongs to the truncated hemoglobin family. Group II subfamily. In terms of assembly, homodimer when ferric. Interacts with RGLG3 and RGLG4. Heme serves as cofactor. As to expression, expressed ubiquitously, with higher levels in root tissue than in shoot tissue.

Functionally, hemoglobin-like protein that exhibits an unusual concentration-independent binding of O(2) and CO. May promote shoot organogenesis from root explants in vitro. Inhibits RGLG3 and RGLG4 ubiquitination activity. The polypeptide is Two-on-two hemoglobin-3 (GLB3) (Arabidopsis thaliana (Mouse-ear cress)).